We begin with the raw amino-acid sequence, 421 residues long: Gamma-glutamyl phosphate reductase (421 aa).

The protein belongs to the gamma-glutamyl phosphate reductase family.

The protein resides in the cytoplasm. The catalysed reaction is L-glutamate 5-semialdehyde + phosphate + NADP(+) = L-glutamyl 5-phosphate + NADPH + H(+). It functions in the pathway amino-acid biosynthesis; L-proline biosynthesis; L-glutamate 5-semialdehyde from L-glutamate: step 2/2. Functionally, catalyzes the NADPH-dependent reduction of L-glutamate 5-phosphate into L-glutamate 5-semialdehyde and phosphate. The product spontaneously undergoes cyclization to form 1-pyrroline-5-carboxylate. This chain is Gamma-glutamyl phosphate reductase, found in Nocardia farcinica (strain IFM 10152).